The following is a 488-amino-acid chain: Protein nucleotidyltransferase YdiU (488 aa).

Positions 91, 93, 94, 114, 126, 127, 177, and 184 each coordinate ATP. Asp-253 (proton acceptor) is an active-site residue. Mg(2+) is bound by residues Asn-254 and Asp-263. Asp-263 lines the ATP pocket.

The protein belongs to the SELO family. Requires Mg(2+) as cofactor. Mn(2+) serves as cofactor.

The enzyme catalyses L-seryl-[protein] + ATP = 3-O-(5'-adenylyl)-L-seryl-[protein] + diphosphate. It carries out the reaction L-threonyl-[protein] + ATP = 3-O-(5'-adenylyl)-L-threonyl-[protein] + diphosphate. It catalyses the reaction L-tyrosyl-[protein] + ATP = O-(5'-adenylyl)-L-tyrosyl-[protein] + diphosphate. The catalysed reaction is L-histidyl-[protein] + UTP = N(tele)-(5'-uridylyl)-L-histidyl-[protein] + diphosphate. The enzyme catalyses L-seryl-[protein] + UTP = O-(5'-uridylyl)-L-seryl-[protein] + diphosphate. It carries out the reaction L-tyrosyl-[protein] + UTP = O-(5'-uridylyl)-L-tyrosyl-[protein] + diphosphate. Functionally, nucleotidyltransferase involved in the post-translational modification of proteins. It can catalyze the addition of adenosine monophosphate (AMP) or uridine monophosphate (UMP) to a protein, resulting in modifications known as AMPylation and UMPylation. The polypeptide is Protein nucleotidyltransferase YdiU (Bacillus cereus (strain ATCC 14579 / DSM 31 / CCUG 7414 / JCM 2152 / NBRC 15305 / NCIMB 9373 / NCTC 2599 / NRRL B-3711)).